A 465-amino-acid polypeptide reads, in one-letter code: GTPase Der (465 aa).

2 consecutive EngA-type G domains span residues 3-166 (FLVA…LNEY) and 184-358 (IHFS…ACAN). Residues 9 to 16 (GRANVGKS), 56 to 60 (DTGGI), 118 to 121 (NKVD), 190 to 197 (GRPNVGKS), 237 to 241 (DTAGV), and 302 to 305 (NKWD) each bind GTP. The 85-residue stretch at 359–443 (KKITTADATR…PIVFEFKQSE (85 aa)) folds into the KH-like domain. The disordered stretch occupies residues 446–465 (FADRKNKRSKDEGSKSKKVK).

The protein belongs to the TRAFAC class TrmE-Era-EngA-EngB-Septin-like GTPase superfamily. EngA (Der) GTPase family. In terms of assembly, associates with the 50S ribosomal subunit.

GTPase that plays an essential role in the late steps of ribosome biogenesis. This chain is GTPase Der, found in Francisella tularensis subsp. novicida (strain U112).